The primary structure comprises 166 residues: Small ribosomal subunit protein uS5 (166 aa).

An S5 DRBM domain is found at 11–74; sequence LQEKLIAVNR…EQAKRNLSKV (64 aa).

This sequence belongs to the universal ribosomal protein uS5 family. As to quaternary structure, part of the 30S ribosomal subunit. Contacts proteins S4 and S8.

Functionally, with S4 and S12 plays an important role in translational accuracy. Located at the back of the 30S subunit body where it stabilizes the conformation of the head with respect to the body. This chain is Small ribosomal subunit protein uS5, found in Aeromonas salmonicida (strain A449).